Here is a 1138-residue protein sequence, read N- to C-terminus: MKLFPRSILIILVLSFALNLGLVTKTHAKDTLDSIVDILSGLTCETQGVGDLLRTEFSHTCIVAPFFTFAVMNLVSPVLYMNTFLKLKINDSDLFNDSNFGNFPGGQCTRENRIDPKNPELRFALCNNAKLIVSRAKSVAESALAIAKAVLTGGDPWDDIKKAWENKKKEYHIPYSGKPGDDGFAFDAGFPVIYWKIIQDKDRICVSTKGFTGDVPVGCKYMKEPFPKSMYNSFMDVADKDFIQDPKETPTDPLALVSCSAAGGGCYQKAYNASKTAVVMTSPLIECMRQMIARLLISKDVCSFDNVEQVVNLASRQDSALFQFQVGMYKIVTAFLTLYVMFFGFKLLLAGEIPPKSEYINFILKMIFVTYFSIGINITPGNGSPYDRLDGMIQWAFPFLLDGINGLASWVMNAAPSGLCKFNNLSYDGTVSYIALWDALDCRVAHYLGLDILSTLLVENAYRSHDFLNFDFFSFSAPPYIYLLIPAIISGNMMLVSLALSYPLLVISVAAFMVNATIMCMISIVILGILAPLFVPMFLFTYTRNYFDSWVKLMISFLLQPMVVVTFMITMFSVYDYGFYGKCQYKSKLIHNSIENLAQSGGTSSRDVLIFYINNDWDDISQYPDKDAVESCQNSLGYMLNNPITTAFNFAKDSVSEIVDSKPGDTPTDKFLAKFQFLSGVVLGPGMFFMSPKVLFEKIKNILLALVTACFTLYLMYNFSSQLAEFAADMTEGVALNNVAIKPQAIFKAGMAALAAAGAATKGVDQIASRGGVGDLKAGQGGGVSDNIAKSGGGGPNDNIAASGGTSAPTVTTPTASSSVATSSPKTVSSEARSDVVTPPPAPSEAVSPPPASIRTSISTPAPQSNIETESVGKIIRDNNQESKKEIDNTPPPQEKVDNAAPQEKVDSTSKGTGVIDYSFNLKEHENPAGVKQIRENAEIRDKRAEVEKAWNELVASGGGRIRDQQGEETSERRTNAEKKWNELVDSGVVTEIRERDNSVTNKFDKLADELNKSEKAKVEENKNIENDRKENNTTTSPQEKVDSTSRGSGVIDYSFNLKEHENPTGVKQIRENAEIRDKRVKVETAWNELVASGGGRVREQEGGEVSERRANAVKTWDELVKSGVVTEKKDNSSNENS.

An N-terminal signal peptide occupies residues 1–28 (MKLFPRSILIILVLSFALNLGLVTKTHA). The next 7 helical transmembrane spans lie at 331 to 351 (IVTA…LLAG), 359 to 379 (YINF…INIT), 392 to 412 (MIQW…SWVM), 494 to 514 (MLVS…AFMV), 520 to 540 (CMIS…MFLF), 554 to 574 (MISF…MFSV), and 699 to 719 (IKNI…MYNF). Residues 775 to 784 (DLKAGQGGGV) are compositionally biased toward gly residues. Disordered regions lie at residues 775 to 914 (DLKA…KGTG), 958 to 977 (GGGR…RTNA), and 995 to 1071 (ERDN…KQIR). Over residues 801–830 (AASGGTSAPTVTTPTASSSVATSSPKTVSS) the composition is skewed to low complexity. Positions 838 to 852 (TPPPAPSEAVSPPPA) are enriched in pro residues. Polar residues predominate over residues 854 to 869 (IRTSISTPAPQSNIET). Basic and acidic residues-rich tracts occupy residues 875–888 (IIRD…KEID), 961–977 (RIRD…RTNA), 995–1032 (ERDN…RKEN), and 1058–1071 (LKEH…KQIR).

The protein belongs to the TrbL/VirB6 family.

The protein resides in the cell membrane. This is an uncharacterized protein from Rickettsia felis (strain ATCC VR-1525 / URRWXCal2) (Rickettsia azadi).